The sequence spans 597 residues: Elongation factor 4 (597 aa).

Residues Lys2–Glu184 form the tr-type G domain. GTP contacts are provided by residues Asp14–Thr19 and Asn131–Asp134.

This sequence belongs to the TRAFAC class translation factor GTPase superfamily. Classic translation factor GTPase family. LepA subfamily.

The protein localises to the cell inner membrane. The enzyme catalyses GTP + H2O = GDP + phosphate + H(+). Required for accurate and efficient protein synthesis under certain stress conditions. May act as a fidelity factor of the translation reaction, by catalyzing a one-codon backward translocation of tRNAs on improperly translocated ribosomes. Back-translocation proceeds from a post-translocation (POST) complex to a pre-translocation (PRE) complex, thus giving elongation factor G a second chance to translocate the tRNAs correctly. Binds to ribosomes in a GTP-dependent manner. The chain is Elongation factor 4 from Vibrio atlanticus (strain LGP32) (Vibrio splendidus (strain Mel32)).